The following is a 235-amino-acid chain: High affinity immunoglobulin epsilon receptor subunit beta (235 aa).

Residues 1 to 23 are disordered; the sequence is MDTENRSRADLALPNPQESSSAP. At 1–51 the chain is on the cytoplasmic side; the sequence is MDTENRSRADLALPNPQESSSAPDIELLEASPAKAAPPKQTWRTFLKKELE. Residues 52–71 traverse the membrane as a helical segment; it reads FLGATQILVGLICLCFGTIV. At 72 to 89 the chain is on the extracellular side; it reads CSVLYVSDFDEEVLLLYK. Residues 90 to 109 traverse the membrane as a helical segment; sequence LGYPFWGAVLFVLSGFLSII. Residues 110–122 lie on the Cytoplasmic side of the membrane; the sequence is SERKNTLYLVRGS. Residues 123–142 form a helical membrane-spanning segment; it reads LGANIVSSIAAGTGIAMLIL. Topologically, residues 143-171 are extracellular; that stretch reads NLTNNFAYMNNCKNVTEDDGCFVASFTTE. The chain crosses the membrane as a helical span at residues 172-191; it reads LVLMMLFLTILAFCSAVLFT. The Cytoplasmic segment spans residues 192-235; that stretch reads IYRIGQELESKKVPDDRLYEELNVYSPIYSELEDKGETSSPVDS. Phosphotyrosine is present on residues Tyr210 and Tyr216. The residue at position 217 (Ser217) is a Phosphoserine. A Phosphotyrosine modification is found at Tyr220.

It belongs to the MS4A family. Tetramer of an alpha chain, a beta chain, and two disulfide linked gamma chains. Binds LILRB1. Interacts with FGR. Interacts with FGR and FES/FPS. Interacts with LYN. Post-translationally, phosphorylated on tyrosine residues by LYN.

It localises to the membrane. Functionally, high affinity receptor that binds to the Fc region of immunoglobulins epsilon. Aggregation of FCER1 by multivalent antigens is required for the full mast cell response, including the release of preformed mediators (such as histamine) by degranulation and de novo production of lipid mediators and cytokines. Also mediates the secretion of important lymphokines. Binding of allergen to receptor-bound IgE leads to cell activation and the release of mediators responsible for the manifestations of allergy. In Mus musculus (Mouse), this protein is High affinity immunoglobulin epsilon receptor subunit beta (Ms4a2).